The following is a 221-amino-acid chain: Histidine biosynthesis bifunctional protein HisIE (221 aa).

Positions 1–129 (MAYSKNFSIE…AKKTSPFSNI (129 aa)) are phosphoribosyl-AMP cyclohydrolase. The segment at 130–221 (CSELFDTLHE…VLESRRGKNN (92 aa)) is phosphoribosyl-ATP pyrophosphohydrolase.

This sequence in the N-terminal section; belongs to the PRA-CH family. The protein in the C-terminal section; belongs to the PRA-PH family.

It localises to the cytoplasm. It catalyses the reaction 1-(5-phospho-beta-D-ribosyl)-ATP + H2O = 1-(5-phospho-beta-D-ribosyl)-5'-AMP + diphosphate + H(+). It carries out the reaction 1-(5-phospho-beta-D-ribosyl)-5'-AMP + H2O = 1-(5-phospho-beta-D-ribosyl)-5-[(5-phospho-beta-D-ribosylamino)methylideneamino]imidazole-4-carboxamide. It functions in the pathway amino-acid biosynthesis; L-histidine biosynthesis; L-histidine from 5-phospho-alpha-D-ribose 1-diphosphate: step 2/9. It participates in amino-acid biosynthesis; L-histidine biosynthesis; L-histidine from 5-phospho-alpha-D-ribose 1-diphosphate: step 3/9. The polypeptide is Histidine biosynthesis bifunctional protein HisIE (Prochlorococcus marinus subsp. pastoris (strain CCMP1986 / NIES-2087 / MED4)).